The sequence spans 88 residues: UPF0297 protein STER_1937 (88 aa).

It belongs to the UPF0297 family.

This chain is UPF0297 protein STER_1937, found in Streptococcus thermophilus (strain ATCC BAA-491 / LMD-9).